Here is a 247-residue protein sequence, read N- to C-terminus: tRNA pseudouridine synthase A (247 aa).

The Nucleophile role is filled by Asp52. Substrate is bound at residue Tyr113.

Belongs to the tRNA pseudouridine synthase TruA family. In terms of assembly, homodimer.

The enzyme catalyses uridine(38/39/40) in tRNA = pseudouridine(38/39/40) in tRNA. Functionally, formation of pseudouridine at positions 38, 39 and 40 in the anticodon stem and loop of transfer RNAs. In Bartonella tribocorum (strain CIP 105476 / IBS 506), this protein is tRNA pseudouridine synthase A.